The sequence spans 393 residues: Acetylornithine aminotransferase 1 (393 aa).

N(2)-acetyl-L-ornithine is bound at residue R131. 215–218 is a binding site for pyridoxal 5'-phosphate; the sequence is DEVQ. K244 carries the N6-(pyridoxal phosphate)lysine modification. Residue T272 coordinates N(2)-acetyl-L-ornithine. T273 is a binding site for pyridoxal 5'-phosphate.

It belongs to the class-III pyridoxal-phosphate-dependent aminotransferase family. ArgD subfamily. As to quaternary structure, homodimer. Pyridoxal 5'-phosphate is required as a cofactor.

The protein localises to the cytoplasm. It carries out the reaction N(2)-acetyl-L-ornithine + 2-oxoglutarate = N-acetyl-L-glutamate 5-semialdehyde + L-glutamate. Its pathway is amino-acid biosynthesis; L-arginine biosynthesis; N(2)-acetyl-L-ornithine from L-glutamate: step 4/4. The polypeptide is Acetylornithine aminotransferase 1 (Bordetella bronchiseptica (strain ATCC BAA-588 / NCTC 13252 / RB50) (Alcaligenes bronchisepticus)).